Here is a 426-residue protein sequence, read N- to C-terminus: 26S proteasome regulatory subunit 7 (426 aa).

An ATP-binding site is contributed by 209–216 (GPPGTGKT).

This sequence belongs to the AAA ATPase family.

The protein resides in the cytoplasm. Its subcellular location is the nucleus. In terms of biological role, the 26S proteasome is involved in the ATP-dependent degradation of ubiquitinated proteins. The regulatory (or ATPase) complex confers ATP dependency and substrate specificity to the 26S complex. This is 26S proteasome regulatory subunit 7 (RPT1) from Spinacia oleracea (Spinach).